The sequence spans 63 residues: Large ribosomal subunit protein bL32c (63 aa).

Residues 38-63 form a disordered region; sequence RSFSGVSEHPKPKGFSRQQTNNRVLG. A compositionally biased stretch (polar residues) spans 53–63; it reads SRQQTNNRVLG.

Belongs to the bacterial ribosomal protein bL32 family.

It is found in the plastid. The protein localises to the chloroplast. In Oryza sativa (Rice), this protein is Large ribosomal subunit protein bL32c (rpl32).